The primary structure comprises 192 residues: Leucyl/phenylalanyl-tRNA--protein transferase (192 aa).

It belongs to the L/F-transferase family.

The protein resides in the cytoplasm. It catalyses the reaction N-terminal L-lysyl-[protein] + L-leucyl-tRNA(Leu) = N-terminal L-leucyl-L-lysyl-[protein] + tRNA(Leu) + H(+). The catalysed reaction is N-terminal L-arginyl-[protein] + L-leucyl-tRNA(Leu) = N-terminal L-leucyl-L-arginyl-[protein] + tRNA(Leu) + H(+). It carries out the reaction L-phenylalanyl-tRNA(Phe) + an N-terminal L-alpha-aminoacyl-[protein] = an N-terminal L-phenylalanyl-L-alpha-aminoacyl-[protein] + tRNA(Phe). Its function is as follows. Functions in the N-end rule pathway of protein degradation where it conjugates Leu, Phe and, less efficiently, Met from aminoacyl-tRNAs to the N-termini of proteins containing an N-terminal arginine or lysine. The sequence is that of Leucyl/phenylalanyl-tRNA--protein transferase from Synechococcus sp. (strain JA-3-3Ab) (Cyanobacteria bacterium Yellowstone A-Prime).